The chain runs to 307 residues: Putative serpin A13 (307 aa).

A signal peptide spans 1–21 (MEASRWWLLVTVLMAGAHCVA). Asparagine 150 and asparagine 250 each carry an N-linked (GlcNAc...) asparagine glycan.

It belongs to the serpin family.

The protein localises to the secreted. In Homo sapiens (Human), this protein is Putative serpin A13 (SERPINA13P).